The primary structure comprises 256 residues: Non-homologous end joining protein Ku 2 (256 aa).

In terms of domain architecture, Ku spans 13–184; sequence FADTDVAVKL…SLELQESPVS (172 aa).

The protein belongs to the prokaryotic Ku family. As to quaternary structure, homodimer. Interacts with LigD.

Functionally, with LigD forms a non-homologous end joining (NHEJ) DNA repair enzyme, which repairs dsDNA breaks with reduced fidelity. Binds linear dsDNA with 5'- and 3'- overhangs but not closed circular dsDNA nor ssDNA. Recruits and stimulates the ligase activity of LigD. The chain is Non-homologous end joining protein Ku 2 from Geotalea uraniireducens (strain Rf4) (Geobacter uraniireducens).